The sequence spans 124 residues: Large ribosomal subunit protein bL12 (124 aa).

Residues 101–115 (ALSKDDAEKAKKELE) are compositionally biased toward basic and acidic residues. Residues 101 to 124 (ALSKDDAEKAKKELEEAGATVELK) form a disordered region.

This sequence belongs to the bacterial ribosomal protein bL12 family. Homodimer. Part of the ribosomal stalk of the 50S ribosomal subunit. Forms a multimeric L10(L12)X complex, where L10 forms an elongated spine to which 2 to 4 L12 dimers bind in a sequential fashion. Binds GTP-bound translation factors.

In terms of biological role, forms part of the ribosomal stalk which helps the ribosome interact with GTP-bound translation factors. Is thus essential for accurate translation. The sequence is that of Large ribosomal subunit protein bL12 from Hahella chejuensis (strain KCTC 2396).